The following is a 128-amino-acid chain: Ribonuclease pancreatic (128 aa).

The tract at residues Ala1 to Ala23 is disordered. 2 residues coordinate substrate: Lys7 and Arg10. The active-site Proton acceptor is His12. Disulfide bonds link Cys26–Cys84, Cys40–Cys95, Cys58–Cys110, and Cys65–Cys72. Substrate contacts are provided by residues Lys41–Thr45, Lys66, and Arg85. Catalysis depends on His119, which acts as the Proton donor.

This sequence belongs to the pancreatic ribonuclease family. In terms of assembly, monomer. Interacts with and forms tight 1:1 complexes with RNH1. Dimerization of two such complexes may occur. Interaction with RNH1 inhibits this protein. In terms of tissue distribution, pancreas.

It is found in the secreted. It catalyses the reaction an [RNA] containing cytidine + H2O = an [RNA]-3'-cytidine-3'-phosphate + a 5'-hydroxy-ribonucleotide-3'-[RNA].. The catalysed reaction is an [RNA] containing uridine + H2O = an [RNA]-3'-uridine-3'-phosphate + a 5'-hydroxy-ribonucleotide-3'-[RNA].. Its function is as follows. Endonuclease that catalyzes the cleavage of RNA on the 3' side of pyrimidine nucleotides. Acts on single-stranded and double-stranded RNA. This chain is Ribonuclease pancreatic (RNASE1), found in Hydrochoerus hydrochaeris (Capybara).